The primary structure comprises 470 residues: Rhamnulokinase (470 aa).

Position 12–16 (12–16 (ASSGR)) interacts with ATP. Substrate-binding positions include alanine 80 and 237-239 (HDT). Residue aspartate 238 is the Proton acceptor of the active site. ATP is bound at residue threonine 259. Substrate is bound at residue asparagine 296. Position 304 (glutamine 304) interacts with ATP. Cysteines 353 and 370 form a disulfide. Position 402 (glycine 402) interacts with ATP.

Belongs to the rhamnulokinase family. It depends on Mg(2+) as a cofactor.

It catalyses the reaction L-rhamnulose + ATP = L-rhamnulose 1-phosphate + ADP + H(+). It participates in carbohydrate degradation; L-rhamnose degradation; glycerone phosphate from L-rhamnose: step 2/3. In terms of biological role, involved in the catabolism of L-rhamnose (6-deoxy-L-mannose). Catalyzes the transfer of the gamma-phosphate group from ATP to the 1-hydroxyl group of L-rhamnulose to yield L-rhamnulose 1-phosphate. In Oceanobacillus iheyensis (strain DSM 14371 / CIP 107618 / JCM 11309 / KCTC 3954 / HTE831), this protein is Rhamnulokinase.